The chain runs to 1046 residues: MNMNESISKDGQGEEEQNNFSFGGKPGSYDSNSDSAQRKKSFSTTKPTEYNLPKEQPESTSKNLETKAKNILLPWRKKHNKDSETPHEDTEADANRRANVTSDVNPVSADTKSSSGPNATITTHGYSYVKTTTPAATSEQSKVKTSPPTSHEHSNIKASPTAHRHSKGDAGHPSIATTHNHSTSKAATSPVTHTHGHSSATTSPVTHTHGHASVKTTSPTNTHEHSKANTGPSATATTHGHINVKTTHPVSHGHSGSSTGPKSTAAAQDHSSTKTNPSVTHGHTSVKDNSSATKGYSNTDSNSDRDVIPGSFRGMTGTDVNPVDPSVYTSTGPKSNVSSGMNAVDPSVYTDTSSKSADRRKYSGNTATGPPQDTIKEIAQNVKMDESEQTGLKNDQVSGSDAIQQQTMEPEPKAAVGTSGFVSQQPSYHDSNKNIQHPEKNKVDNKNISERAAEKFNIERDDILESADDYQQKNIKSKTDSNWGPIEYSSSAGKNKNLQDVVIPSSMKEKFDSGTSGSQNMPKAGTELGHMKYNDNGRDNLQYVAGSQAGSQNTNNNIDMSPRHEAEWSGLSNDATTRNNVVSPAMKDEDMNEDSTKPHQYGLDYLDDVEDYHENDIDDYSNAKKNDLYSKKAYQGKPSDYNYEQREKIPGTFEPDTLSKSVQKQDEDPLSPRQTTNRAGMETARDESLGNYEYSNTSGNKKLSDLSKNKSGPTPTRSNFIDQIEPRRAKTTQDIASDAKDFTNNPETGTTGNVDTTGRMGAKSKTFSSNPFDDSKNTDTHLENANVAAFDNSRSGDTTYSKSGDAETAAYDNIKNADPTYAKSQDITGMTHDQEPSSEQKASYGSGGNSQNQEYSSDDNIDVNKNAKVLEEDAPGYKREVDLKNKRRTDLGGADASNAYAAEVGNFPSLIDPHVPTYGFKDTNTSSSQKPSEGTYPETTSYSIHNETTSQGRKVSVGSMGSGKSKHHHNHHRHSRQNSSKGSDYDYNNSTHSAEHTPRHHQYGSDEGEQDYHDDEQGEEQAGKQSFMGRVRKSISGGTFGFRSEI.

Disordered stretches follow at residues 1 to 455 (MNMN…AAEK), 469 to 894 (DYQQ…LGGA), and 908 to 1046 (PSLI…RSEI). Phosphoserine is present on Ser-41. Basic and acidic residues predominate over residues 81–96 (KDSETPHEDTEADANR). 3 stretches are compositionally biased toward polar residues: residues 98–149 (ANVT…SPPT), 175–191 (IATT…TSPV), and 228–301 (ANTG…NTDS). Ser-303 carries the post-translational modification Phosphoserine. Polar residues predominate over residues 327–341 (VYTSTGPKSNVSSGM). Ser-363 is modified (phosphoserine). Polar residues-rich tracts occupy residues 389 to 408 (QTGL…QQTM) and 420 to 429 (GFVSQQPSYH). A compositionally biased stretch (basic and acidic residues) spans 430 to 455 (DSNKNIQHPEKNKVDNKNISERAAEK). Polar residues predominate over residues 488 to 498 (YSSSAGKNKNL). The residue at position 491 (Ser-491) is a Phosphoserine. Basic and acidic residues predominate over residues 529-538 (GHMKYNDNGR). Polar residues predominate over residues 548 to 559 (QAGSQNTNNNID). Ser-561 carries the post-translational modification Phosphoserine. Positions 570-582 (GLSNDATTRNNVV) are enriched in polar residues. The segment covering 586–597 (MKDEDMNEDSTK) has biased composition (basic and acidic residues). The segment covering 605 to 619 (YLDDVEDYHENDIDD) has biased composition (acidic residues). Residues 621 to 630 (SNAKKNDLYS) are compositionally biased toward basic and acidic residues. At Ser-671 the chain carries Phosphoserine. The segment covering 742–756 (FTNNPETGTTGNVDT) has biased composition (polar residues). The segment covering 773 to 782 (DDSKNTDTHL) has biased composition (basic and acidic residues). 2 stretches are compositionally biased toward polar residues: residues 792–802 (NSRSGDTTYSK) and 837–855 (SSEQ…NQEY). A Phosphotyrosine modification is found at Tyr-855. Ser-857 bears the Phosphoserine mark. Over residues 868 to 890 (KVLEEDAPGYKREVDLKNKRRTD) the composition is skewed to basic and acidic residues. Positions 922–951 (DTNTSSSQKPSEGTYPETTSYSIHNETTSQ) are enriched in polar residues. Residues 952–963 (GRKVSVGSMGSG) show a composition bias toward low complexity. Over residues 964–976 (KSKHHHNHHRHSR) the composition is skewed to basic residues. Ser-1005 carries the post-translational modification Phosphoserine. Over residues 1006-1019 (DEGEQDYHDDEQGE) the composition is skewed to acidic residues. Position 1034 is a phosphoserine (Ser-1034).

In terms of assembly, conjugated with HUB1. HUB1 has not the classical C-terminal Gly residue, so it is still unknown how conjugation may occur.

The protein localises to the cytoplasm. Polarity-determining protein which forms a conjugate with the ubiquitin-like modifier HUB1. Involved in bud site selection and cellular morphogenesis during conjugation. Required for survival during stationary phase. The protein is Protein HBT1 (HBT1) of Saccharomyces cerevisiae (strain ATCC 204508 / S288c) (Baker's yeast).